Reading from the N-terminus, the 415-residue chain is Gamma-glutamyl phosphate reductase (415 aa).

This sequence belongs to the gamma-glutamyl phosphate reductase family.

It is found in the cytoplasm. It catalyses the reaction L-glutamate 5-semialdehyde + phosphate + NADP(+) = L-glutamyl 5-phosphate + NADPH + H(+). It functions in the pathway amino-acid biosynthesis; L-proline biosynthesis; L-glutamate 5-semialdehyde from L-glutamate: step 2/2. Functionally, catalyzes the NADPH-dependent reduction of L-glutamate 5-phosphate into L-glutamate 5-semialdehyde and phosphate. The product spontaneously undergoes cyclization to form 1-pyrroline-5-carboxylate. The sequence is that of Gamma-glutamyl phosphate reductase from Carboxydothermus hydrogenoformans (strain ATCC BAA-161 / DSM 6008 / Z-2901).